The chain runs to 83 residues: Small ribosomal subunit protein bS16 (83 aa).

This sequence belongs to the bacterial ribosomal protein bS16 family.

The chain is Small ribosomal subunit protein bS16 from Ectopseudomonas mendocina (strain ymp) (Pseudomonas mendocina).